Here is a 66-residue protein sequence, read N- to C-terminus: Cold shock-like protein CspD (66 aa).

The CSD domain occupies 4-63; sequence GKVKWFNSEKGFGFIEVEGGDDVFVHFSAIQGDGFKTLEEGQEVSFEIVEGNRGPQAANV.

In terms of assembly, homodimer.

It is found in the cytoplasm. The protein is Cold shock-like protein CspD (cspD) of Bacillus anthracis.